We begin with the raw amino-acid sequence, 504 residues long: MNVKPEEITSIIKSQIEKYEKKIETVDSGTIIQIGDGIARVYGLNGCMAGELLEFPNDVYAMALNLEQDNVGCVLLGSQEGIKEGNTVKRTGKVVEVPVGENIIGRVVNSLGHPIDGKGAISTTETRAVELVAPGVITRQAVKQPLQTGIKAIDAMIPIGRGQRELIIGDRQTGKTAIAMDTIINQKGKDVICIYVAIGQKQSTVAHIVNNLIETNAMDYTIVVSAAASESAPLQYIAPYAGCSMGEYFMNKGKDVLIVYDDLSKHAVAYRAMSLLLRRPPRREAYPGDVFYLHSRLLERAAKLSDKLGGGSLTALPIIETLAGDVTAYIPTNVISITDGQIFLETELFYSGQRPAINAGISVSRVGGNAQIKAMKQVAGTLRIDLAQYRELASFAQFGSDLDKESKRTLEKGKRLTEILKQPQYKPMAVEKQVMILFAASRNYIMDIPVERISEFEEEFLDYMDTHHREIGDEIKEKQVISDELSDKLRNAIEEFKKIFLIEG.

Glycine 169–threonine 176 provides a ligand contact to ATP.

This sequence belongs to the ATPase alpha/beta chains family. As to quaternary structure, F-type ATPases have 2 components, CF(1) - the catalytic core - and CF(0) - the membrane proton channel. CF(1) has five subunits: alpha(3), beta(3), gamma(1), delta(1), epsilon(1). CF(0) has three main subunits: a(1), b(2) and c(9-12). The alpha and beta chains form an alternating ring which encloses part of the gamma chain. CF(1) is attached to CF(0) by a central stalk formed by the gamma and epsilon chains, while a peripheral stalk is formed by the delta and b chains.

Its subcellular location is the cell membrane. It catalyses the reaction ATP + H2O + 4 H(+)(in) = ADP + phosphate + 5 H(+)(out). Produces ATP from ADP in the presence of a proton gradient across the membrane. The alpha chain is a regulatory subunit. This chain is ATP synthase subunit alpha, found in Clostridium kluyveri (strain ATCC 8527 / DSM 555 / NBRC 12016 / NCIMB 10680 / K1).